Here is an 84-residue protein sequence, read N- to C-terminus: MNIFDFFRDRKKGSTASVAKERLQIIVAHERGQRSTPDYLPALQKELVEVIRKYVNIESDQVQVALESQGSCSILELNITLPDR.

Belongs to the MinE family.

Its function is as follows. Prevents the cell division inhibition by proteins MinC and MinD at internal division sites while permitting inhibition at polar sites. This ensures cell division at the proper site by restricting the formation of a division septum at the midpoint of the long axis of the cell. The chain is Cell division topological specificity factor from Pseudomonas syringae pv. syringae (strain B728a).